The chain runs to 118 residues: UPF0449 protein C19orf25 (118 aa).

Tyrosine 63 carries the phosphotyrosine modification. Residues asparagine 81–leucine 109 are a coiled coil.

It belongs to the UPF0449 family.

The protein is UPF0449 protein C19orf25 (C19orf25) of Homo sapiens (Human).